The chain runs to 390 residues: UPF0496 protein At1g20180 (390 aa).

Helical transmembrane passes span 228–248 (LGGYSLVITHSAIVITLLIIA) and 250–270 (HSILGVFAAPALLGLCSFCLL).

It belongs to the UPF0496 family.

It is found in the membrane. The protein is UPF0496 protein At1g20180 of Arabidopsis thaliana (Mouse-ear cress).